An 82-amino-acid chain; its full sequence is RNA-binding protein Hfq (82 aa).

The Sm domain occupies 9 to 68 (DPYLNTLRKERVPVSIYLVNGIKLQGQIESFDQFVILLKNTVSQMVYKTAISTVVPSRPV).

This sequence belongs to the Hfq family. As to quaternary structure, homohexamer.

Functionally, RNA chaperone that binds small regulatory RNA (sRNAs) and mRNAs to facilitate mRNA translational regulation in response to envelope stress, environmental stress and changes in metabolite concentrations. Also binds with high specificity to tRNAs. In Pseudomonas aeruginosa, this protein is RNA-binding protein Hfq.